A 332-amino-acid chain; its full sequence is Holliday junction branch migration complex subunit RuvB (332 aa).

The segment at 1–181 (MSRILDNEIM…FGITGHMEYY (181 aa)) is large ATPase domain (RuvB-L). ATP contacts are provided by residues Leu-20, Arg-21, Gly-62, Lys-65, Thr-66, Thr-67, 128–130 (EDF), Arg-171, Tyr-181, and Arg-218. Thr-66 contributes to the Mg(2+) binding site. Positions 182–252 (AHAGLTEIVE…ITDKALTMLD (71 aa)) are small ATPAse domain (RuvB-S). A head domain (RuvB-H) region spans residues 255–332 (HEGLDYVDQK…EHLGYEYSEK (78 aa)). DNA contacts are provided by Arg-291, Arg-310, Arg-312, and Arg-315.

This sequence belongs to the RuvB family. In terms of assembly, homohexamer. Forms an RuvA(8)-RuvB(12)-Holliday junction (HJ) complex. HJ DNA is sandwiched between 2 RuvA tetramers; dsDNA enters through RuvA and exits via RuvB. An RuvB hexamer assembles on each DNA strand where it exits the tetramer. Each RuvB hexamer is contacted by two RuvA subunits (via domain III) on 2 adjacent RuvB subunits; this complex drives branch migration. In the full resolvosome a probable DNA-RuvA(4)-RuvB(12)-RuvC(2) complex forms which resolves the HJ.

It is found in the cytoplasm. The enzyme catalyses ATP + H2O = ADP + phosphate + H(+). In terms of biological role, the RuvA-RuvB-RuvC complex processes Holliday junction (HJ) DNA during genetic recombination and DNA repair, while the RuvA-RuvB complex plays an important role in the rescue of blocked DNA replication forks via replication fork reversal (RFR). RuvA specifically binds to HJ cruciform DNA, conferring on it an open structure. The RuvB hexamer acts as an ATP-dependent pump, pulling dsDNA into and through the RuvAB complex. RuvB forms 2 homohexamers on either side of HJ DNA bound by 1 or 2 RuvA tetramers; 4 subunits per hexamer contact DNA at a time. Coordinated motions by a converter formed by DNA-disengaged RuvB subunits stimulates ATP hydrolysis and nucleotide exchange. Immobilization of the converter enables RuvB to convert the ATP-contained energy into a lever motion, pulling 2 nucleotides of DNA out of the RuvA tetramer per ATP hydrolyzed, thus driving DNA branch migration. The RuvB motors rotate together with the DNA substrate, which together with the progressing nucleotide cycle form the mechanistic basis for DNA recombination by continuous HJ branch migration. Branch migration allows RuvC to scan DNA until it finds its consensus sequence, where it cleaves and resolves cruciform DNA. In Streptococcus pneumoniae (strain JJA), this protein is Holliday junction branch migration complex subunit RuvB.